Consider the following 427-residue polypeptide: Delta(14)-sterol reductase (427 aa).

Over 1-25 the chain is Cytoplasmic; that stretch reads MSEQESRDNAAVDAVRQKYGFGFSW. A helical membrane pass occupies residues 26-46; it reads LVLMIALPPLVYYLWICVTYY. The Periplasmic segment spans residues 47 to 70; that stretch reads QGELVFTSDAAAWRRFWSHVAPPT. The chain crosses the membrane as a helical span at residues 71–91; it reads WHAAGLYAAWFLGQAALQVWA. The Cytoplasmic segment spans residues 92 to 110; that stretch reads PGPTVQGMKLPDGSRLDYR. Residues 111 to 131 traverse the membrane as a helical segment; it reads MNGIFSFLFTLAVVFGLVTMG. Topologically, residues 132-141 are periplasmic; it reads WLDATVLYDQ. A helical membrane pass occupies residues 142-162; the sequence is LGPLLTVVNIFTFVFAGFLYF. The Cytoplasmic segment spans residues 163–197; the sequence is WGLNGKQWERPTGRPFYDYFMGTALNPRIGSLDLK. Residues 198–218 traverse the membrane as a helical segment; it reads LFCEARPGMIFWLLMNLSMAA. Residues 219–226 lie on the Periplasmic side of the membrane; that stretch reads KQYELHGT. A helical membrane pass occupies residues 227-247; it reads VTVPMLLVVGFQSFYLIDYFI. The Cytoplasmic segment spans residues 248-262; it reads HEEAVLTTWDIKHEK. Residues 263-283 form a helical membrane-spanning segment; sequence FGWMLCWGDLVWLPFTYTLQA. Over 284–291 the chain is Periplasmic; sequence QYLVHHTH. A helical transmembrane segment spans residues 292–312; it reads DLPVWGIIAIVALNLAGYAIF. The Cytoplasmic portion of the chain corresponds to 313–356; it reads RGANIQKHHFRRDPNRIVWGKPAKYIKTKQGSLLLTSGWWGIAR. Residues K319, R323, L347, W352, and 359-360 contribute to the NADP(+) site; that span reads NY. The chain crosses the membrane as a helical span at residues 357-377; sequence HMNYFGDLMIALSWCLPAAFG. Position 378 (S378) is a topological domain, periplasmic. Residues 379–399 traverse the membrane as a helical segment; it reads PIPYFHIVYFTILLLHREKRD. Residues D399, 403–407, and Y414 each bind NADP(+); that span reads CLAKY. At 400-427 the chain is on the cytoplasmic side; it reads DAMCLAKYGEDWLQYRKKVPWRIVPKIY.

This sequence belongs to the ERG4/ERG24 family.

It localises to the cell inner membrane. The catalysed reaction is 4,4-dimethyl-5alpha-cholesta-8,24-dien-3beta-ol + NADP(+) = 4,4-dimethyl-5alpha-cholesta-8,14,24-trien-3beta-ol + NADPH + H(+). It participates in steroid biosynthesis; zymosterol biosynthesis; zymosterol from lanosterol. Its function is as follows. Reduces the C14=C15 double bond of 4,4-dimethyl-cholesta-8,14,24-trienol to produce 4,4-dimethyl-cholesta-8,24-dienol. Complements the deletion of the Delta(14)-sterol reductase gene ERG24 in yeast. The chain is Delta(14)-sterol reductase from Methylotuvimicrobium alcaliphilum (strain DSM 19304 / NCIMB 14124 / VKM B-2133 / 20Z) (Methylomicrobium alcaliphilum).